Reading from the N-terminus, the 447-residue chain is Dihydroorotase (447 aa).

Residues histidine 81 and histidine 83 each coordinate Zn(2+). Substrate contacts are provided by residues 83–85 (HFR) and asparagine 115. Residues aspartate 171, histidine 198, and histidine 252 each contribute to the Zn(2+) site. Asparagine 298 is a binding site for substrate. Aspartate 325 provides a ligand contact to Zn(2+). The active site involves aspartate 325. Substrate-binding positions include histidine 329 and 343–344 (FG).

It belongs to the metallo-dependent hydrolases superfamily. DHOase family. Class I DHOase subfamily. Zn(2+) serves as cofactor.

The catalysed reaction is (S)-dihydroorotate + H2O = N-carbamoyl-L-aspartate + H(+). Its pathway is pyrimidine metabolism; UMP biosynthesis via de novo pathway; (S)-dihydroorotate from bicarbonate: step 3/3. Functionally, catalyzes the reversible cyclization of carbamoyl aspartate to dihydroorotate. In Ehrlichia chaffeensis (strain ATCC CRL-10679 / Arkansas), this protein is Dihydroorotase.